The primary structure comprises 288 residues: Energy-coupling factor transporter ATP-binding protein EcfA2 (288 aa).

The region spanning 3 to 246 (IKLEQLGYCY…PDELVDLGLS (244 aa)) is the ABC transporter domain. Residue 40-47 (GHTGSGKS) participates in ATP binding.

This sequence belongs to the ABC transporter superfamily. Energy-coupling factor EcfA family. As to quaternary structure, forms a stable energy-coupling factor (ECF) transporter complex composed of 2 membrane-embedded substrate-binding proteins (S component), 2 ATP-binding proteins (A component) and 2 transmembrane proteins (T component).

The protein localises to the cell membrane. ATP-binding (A) component of a common energy-coupling factor (ECF) ABC-transporter complex. Unlike classic ABC transporters this ECF transporter provides the energy necessary to transport a number of different substrates. This Listeria innocua serovar 6a (strain ATCC BAA-680 / CLIP 11262) protein is Energy-coupling factor transporter ATP-binding protein EcfA2.